The sequence spans 80 residues: Exodeoxyribonuclease 7 small subunit (80 aa).

The disordered stretch occupies residues 60–80; the sequence is LIDSDGTEHNLDPNNASAPEE. A compositionally biased stretch (basic and acidic residues) spans 61 to 70; that stretch reads IDSDGTEHNL. Positions 71-80 are enriched in polar residues; sequence DPNNASAPEE.

This sequence belongs to the XseB family. In terms of assembly, heterooligomer composed of large and small subunits.

It is found in the cytoplasm. The catalysed reaction is Exonucleolytic cleavage in either 5'- to 3'- or 3'- to 5'-direction to yield nucleoside 5'-phosphates.. In terms of biological role, bidirectionally degrades single-stranded DNA into large acid-insoluble oligonucleotides, which are then degraded further into small acid-soluble oligonucleotides. This is Exodeoxyribonuclease 7 small subunit from Lactobacillus acidophilus (strain ATCC 700396 / NCK56 / N2 / NCFM).